A 555-amino-acid polypeptide reads, in one-letter code: Urocanate hydratase (555 aa).

NAD(+) contacts are provided by residues 52-53, Gln-130, 176-178, Glu-196, Arg-201, 242-243, 263-267, 273-274, and Tyr-322; these read GG, GMG, NA, QTSAH, and YL. Residue Cys-410 is part of the active site. Gly-492 contacts NAD(+).

This sequence belongs to the urocanase family. Requires NAD(+) as cofactor.

It localises to the cytoplasm. It catalyses the reaction 4-imidazolone-5-propanoate = trans-urocanate + H2O. It participates in amino-acid degradation; L-histidine degradation into L-glutamate; N-formimidoyl-L-glutamate from L-histidine: step 2/3. Functionally, catalyzes the conversion of urocanate to 4-imidazolone-5-propionate. This Shewanella baltica (strain OS155 / ATCC BAA-1091) protein is Urocanate hydratase.